Consider the following 362-residue polypeptide: Peptide chain release factor 1 (362 aa).

Gln237 bears the N5-methylglutamine mark.

Belongs to the prokaryotic/mitochondrial release factor family. Post-translationally, methylated by PrmC. Methylation increases the termination efficiency of RF1.

The protein resides in the cytoplasm. In terms of biological role, peptide chain release factor 1 directs the termination of translation in response to the peptide chain termination codons UAG and UAA. This Vibrio vulnificus (strain CMCP6) protein is Peptide chain release factor 1.